Reading from the N-terminus, the 150-residue chain is 3-dehydroquinate dehydratase (150 aa).

Tyrosine 26 acts as the Proton acceptor in catalysis. Residues asparagine 77, histidine 83, and aspartate 90 each coordinate substrate. The active-site Proton donor is histidine 103. Residues leucine 104–serine 105 and arginine 114 each bind substrate.

This sequence belongs to the type-II 3-dehydroquinase family. As to quaternary structure, homododecamer.

It carries out the reaction 3-dehydroquinate = 3-dehydroshikimate + H2O. Its pathway is metabolic intermediate biosynthesis; chorismate biosynthesis; chorismate from D-erythrose 4-phosphate and phosphoenolpyruvate: step 3/7. Catalyzes a trans-dehydration via an enolate intermediate. The polypeptide is 3-dehydroquinate dehydratase (Mannheimia succiniciproducens (strain KCTC 0769BP / MBEL55E)).